We begin with the raw amino-acid sequence, 89 residues long: Co-chaperonin GroES (89 aa).

It belongs to the GroES chaperonin family. Heptamer of 7 subunits arranged in a ring. Interacts with the chaperonin GroEL.

It localises to the cytoplasm. Its function is as follows. Together with the chaperonin GroEL, plays an essential role in assisting protein folding. The GroEL-GroES system forms a nano-cage that allows encapsulation of the non-native substrate proteins and provides a physical environment optimized to promote and accelerate protein folding. GroES binds to the apical surface of the GroEL ring, thereby capping the opening of the GroEL channel. The protein is Co-chaperonin GroES of Porphyromonas gingivalis (strain ATCC 33277 / DSM 20709 / CIP 103683 / JCM 12257 / NCTC 11834 / 2561).